The following is a 146-amino-acid chain: Catabolic 3-dehydroquinase (146 aa).

The Proton acceptor role is filled by tyrosine 24. Residues asparagine 78, histidine 84, and aspartate 91 each contribute to the substrate site. Histidine 104 functions as the Proton donor in the catalytic mechanism. Substrate-binding positions include 105 to 106 and arginine 115; that span reads IT.

It belongs to the type-II 3-dehydroquinase family. As to quaternary structure, homododecamer. Adopts a ring-like structure, composed of an arrangement of two hexameric rings stacked on top of one another.

It carries out the reaction 3-dehydroquinate = 3-dehydroshikimate + H2O. It functions in the pathway aromatic compound metabolism; 3,4-dihydroxybenzoate biosynthesis; 3,4-dihydroxybenzoate from 3-dehydroquinate: step 1/2. In terms of biological role, is involved in the catabolism of quinate. Allows the utilization of quinate as carbon source via the beta-ketoadipate pathway. The protein is Catabolic 3-dehydroquinase of Candida albicans (strain SC5314 / ATCC MYA-2876) (Yeast).